A 313-amino-acid chain; its full sequence is 2-oxoglutarate-dependent dioxygenase eupC (313 aa).

The Fe2OG dioxygenase domain occupies 187-284 (PSIPMRFLHY…LNAKALDGSG (98 aa)). 3 residues coordinate Fe cation: H212, D214, and H263. A 2-oxoglutarate-binding site is contributed by K274.

It belongs to the iron/ascorbate-dependent oxidoreductase family. Fe(2+) is required as a cofactor.

The protein operates within secondary metabolite biosynthesis; terpenoid biosynthesis. In terms of biological role, 2-oxoglutarate-dependent dioxygenase; part of the gene cluster that mediates the biosynthesis of eupenifeldin, a bistropolone meroterpenoid that acts as an antitumor agent. The first step of eupenifeldin biosynthesis is the biosynthesis of 3-methylorcinaldehyde performed by the non-reducing polyketide synthase eupA. Oxidative dearomatization of 3-methylorcinaldehyde likely catalyzed by the FAD-dependent monooxygenase eupB is followed by oxidative ring expansion by the 2-oxoglutarate-dependent dioxygenase eupC to provide the first tropolone metabolite, tropolone stipitaldehyde. In parallel, generation of sesquiterpene alpha-humulene from farnesylpyrophosphate (FPP) is catalyzed by the terpene cyclase eupE. The cytochrome P450 monooxygenase eupD then hydroxylates humulene to humulenol. The putative Diels-Alderase eupF probably catalyzes the formation of the tropolone-humulene skeleton by linking humulenol and the polyketide moiety. The short-chain dehydrogenase/reductase eupG and the flavin-dependent monooxygenase eupH are also essential for eupenifeldin biosynthesis and are likely the additional decorating enzymes of the tropolone-humulene skeleton to produce final eupenifeldin or derivatives. The polypeptide is 2-oxoglutarate-dependent dioxygenase eupC (Phoma sp).